An 854-amino-acid chain; its full sequence is Protein mono-ADP-ribosyltransferase PARP9 (854 aa).

Macro domains are found at residues 107–296 and 306–487; these read LQVF…EFIL and TPSF…AKRS. The 223-residue stretch at 628-850 folds into the PARP catalytic domain; sequence IQQQKTQDEM…QHPWRGFASG (223 aa).

The protein belongs to the ARTD/PARP family. As to quaternary structure, forms a stable complex with E3 ligase DTX3L; the interaction is required for PARP9 mediated ADP-ribosylation of ubiquitin. Interacts (via PARP catalytic domain) with DTX3L (via N-terminus). Forms a complex with STAT1 and DTX3L independently of IFNB1 or IFNG-mediated STAT1 'Tyr-701' phosphorylation. Forms a complex with STAT1, DTX3L and histone H2B H2BC9/H2BJ; the interaction is likely to induce H2BC9/H2BJ ubiquitination. Interacts (via N-terminus) with STAT1. Interacts with PARP14 in IFNG-stimulated macrophages; the interaction prevents PARP14-mediated STAT1 and STAT6 ADP-riboslylation. Interacts with PARP1 (when poly-ADP-ribosylated). Post-translationally, ADP-ribosylated by PARP14. Expressed in lymphocyte-rich tissues, spleen, lymph nodes, peripheral blood lymphocytes and colonic mucosa. Expressed in macrophages. Also expressed in nonhematopoietic tissues such as heart and skeletal muscle. Isoform 2 is the predominant form. Most abundantly expressed in lymphomas with a brisk host inflammatory response. In diffuse large B-cell lymphomas tumors, expressed specifically by malignant B-cells.

It is found in the cytoplasm. Its subcellular location is the cytosol. The protein resides in the nucleus. It carries out the reaction [protein]-C-terminal glycine + NAD(+) = [protein]-C-terminal O-(ADP-D-ribosyl)-glycine + nicotinamide. Its activity is regulated as follows. Binding to poly(ADP-ribose) does not affect its activity. ADP-ribosyltransferase which, in association with E3 ligase DTX3L, plays a role in DNA damage repair and in immune responses including interferon-mediated antiviral defenses. Within the complex, enhances DTX3L E3 ligase activity which is further enhanced by PARP9 binding to poly(ADP-ribose). In association with DTX3L and in presence of E1 and E2 enzymes, mediates NAD(+)-dependent mono-ADP-ribosylation of ubiquitin which prevents ubiquitin conjugation to substrates such as histones. During DNA repair, PARP1 recruits PARP9/BAL1-DTX3L complex to DNA damage sites via PARP9 binding to ribosylated PARP1. Subsequent PARP1-dependent PARP9/BAL1-DTX3L-mediated ubiquitination promotes the rapid and specific recruitment of 53BP1/TP53BP1, UIMC1/RAP80, and BRCA1 to DNA damage sites. In response to DNA damage, PARP9-DTX3L complex is required for efficient non-homologous end joining (NHEJ); the complex function is negatively modulated by PARP9 activity. Dispensable for B-cell receptor (BCR) assembly through V(D)J recombination and class switch recombination (CSR). In macrophages, positively regulates pro-inflammatory cytokines production in response to IFNG stimulation by suppressing PARP14-mediated STAT1 ADP-ribosylation and thus promoting STAT1 phosphorylation. Also suppresses PARP14-mediated STAT6 ADP-ribosylation. The sequence is that of Protein mono-ADP-ribosyltransferase PARP9 (PARP9) from Homo sapiens (Human).